Consider the following 42-residue polypeptide: Photosystem I reaction center subunit IX (42 aa).

A helical transmembrane segment spans residues 7–27 (YLSAAPVLSTLWLGALAGLLI).

This sequence belongs to the PsaJ family.

The protein resides in the plastid membrane. Functionally, may help in the organization of the PsaE and PsaF subunits. In Cuscuta exaltata (Tall dodder), this protein is Photosystem I reaction center subunit IX.